Here is an 87-residue protein sequence, read N- to C-terminus: Protein E7 (87 aa).

Residues 1-38 (MHGPHPTVKDIELSLAPEDVPVQCNVQLDEEDYTNVEE) form an E7 terminal domain region. The segment at 50-86 (CPKCSSPLRLVVECSHADIRALEQLLLGTLTVVCPRC) is a zinc-finger region. Positions 68–76 (IRALEQLLL) match the Nuclear export signal motif.

The protein belongs to the papillomaviridae E7 protein family. Homodimer. Homooligomer. Interacts with host RB1; this interaction induces dissociation of RB1-E2F1 complex thereby disrupting RB1 activity. Interacts with host EP300; this interaction represses EP300 transcriptional activity. Interacts with protein E2; this interaction inhibits E7 oncogenic activity. Interacts with host TMEM173/STING; this interaction impairs the ability of TMEM173/STING to sense cytosolic DNA and promote the production of type I interferon (IFN-alpha and IFN-beta). Post-translationally, highly phosphorylated.

Its subcellular location is the host cytoplasm. It localises to the host nucleus. Functionally, plays a role in viral genome replication by driving entry of quiescent cells into the cell cycle. Stimulation of progression from G1 to S phase allows the virus to efficiently use the cellular DNA replicating machinery to achieve viral genome replication. E7 protein has both transforming and trans-activating activities. Induces the disassembly of the E2F1 transcription factor from RB1, with subsequent transcriptional activation of E2F1-regulated S-phase genes. Interferes with host histone deacetylation mediated by HDAC1 and HDAC2, leading to transcription activation. Also plays a role in the inhibition of both antiviral and antiproliferative functions of host interferon alpha. Interaction with host TMEM173/STING impairs the ability of TMEM173/STING to sense cytosolic DNA and promote the production of type I interferon (IFN-alpha and IFN-beta). In Human papillomavirus 28, this protein is Protein E7.